The primary structure comprises 64 residues: uncharacterized protein (64 aa).

In terms of tissue distribution, widely expressed; not found in breast.

This is an uncharacterized protein from Homo sapiens (Human).